The sequence spans 233 residues: Ribonuclease 3 (233 aa).

Residues 4–126 (LNKLMERLGH…IVGSIYIDAG (123 aa)) form the RNase III domain. Glu-39 is a binding site for Mg(2+). Asp-43 is an active-site residue. Residues Asp-112 and Glu-115 each coordinate Mg(2+). The active site involves Glu-115. Residues 153–222 (DAKSLLQEWL…AKRFLELLDD (70 aa)) form the DRBM domain.

It belongs to the ribonuclease III family. As to quaternary structure, homodimer. It depends on Mg(2+) as a cofactor.

It is found in the cytoplasm. The catalysed reaction is Endonucleolytic cleavage to 5'-phosphomonoester.. Digests double-stranded RNA. Involved in the processing of primary rRNA transcript to yield the immediate precursors to the large and small rRNAs (23S and 16S). Processes some mRNAs, and tRNAs when they are encoded in the rRNA operon. Processes pre-crRNA and tracrRNA of type II CRISPR loci if present in the organism. This is Ribonuclease 3 from Coxiella burnetii (strain CbuG_Q212) (Coxiella burnetii (strain Q212)).